The sequence spans 162 residues: Ribosome maturation factor RimM (162 aa).

The region spanning Asp-91–Met-162 is the PRC barrel domain.

The protein belongs to the RimM family. Binds ribosomal protein uS19.

It is found in the cytoplasm. In terms of biological role, an accessory protein needed during the final step in the assembly of 30S ribosomal subunit, possibly for assembly of the head region. Essential for efficient processing of 16S rRNA. May be needed both before and after RbfA during the maturation of 16S rRNA. It has affinity for free ribosomal 30S subunits but not for 70S ribosomes. In Finegoldia magna (strain ATCC 29328 / DSM 20472 / WAL 2508) (Peptostreptococcus magnus), this protein is Ribosome maturation factor RimM.